The primary structure comprises 732 residues: Catalase-peroxidase (732 aa).

Positions 97-220 (WHSAGTYRTS…LAAVQMGLIY (124 aa)) form a cross-link, tryptophyl-tyrosyl-methioninium (Trp-Tyr) (with M-246). Residue histidine 98 is the Proton acceptor of the active site. Positions 220 to 246 (YVNPEGPDGNPDPVAAGRDIRETFARM) form a cross-link, tryptophyl-tyrosyl-methioninium (Tyr-Met) (with W-97). Histidine 261 is a binding site for heme b.

It belongs to the peroxidase family. Peroxidase/catalase subfamily. In terms of assembly, homodimer or homotetramer. The cofactor is heme b. Formation of the three residue Trp-Tyr-Met cross-link is important for the catalase, but not the peroxidase activity of the enzyme.

It catalyses the reaction H2O2 + AH2 = A + 2 H2O. It carries out the reaction 2 H2O2 = O2 + 2 H2O. Functionally, bifunctional enzyme with both catalase and broad-spectrum peroxidase activity. The chain is Catalase-peroxidase from Pelodictyon phaeoclathratiforme (strain DSM 5477 / BU-1).